We begin with the raw amino-acid sequence, 467 residues long: UDP-N-acetylmuramate--L-alanine ligase (467 aa).

Residue 114–120 (GTHGKTT) coordinates ATP.

It belongs to the MurCDEF family.

Its subcellular location is the cytoplasm. The enzyme catalyses UDP-N-acetyl-alpha-D-muramate + L-alanine + ATP = UDP-N-acetyl-alpha-D-muramoyl-L-alanine + ADP + phosphate + H(+). The protein operates within cell wall biogenesis; peptidoglycan biosynthesis. In terms of biological role, cell wall formation. The polypeptide is UDP-N-acetylmuramate--L-alanine ligase (Nitrobacter winogradskyi (strain ATCC 25391 / DSM 10237 / CIP 104748 / NCIMB 11846 / Nb-255)).